A 257-amino-acid chain; its full sequence is Thiazole synthase (257 aa).

Lys-96 functions as the Schiff-base intermediate with DXP in the catalytic mechanism. Residues Gly-157, Ala-184–Gly-185, and Asn-206–Thr-207 contribute to the 1-deoxy-D-xylulose 5-phosphate site.

It belongs to the ThiG family. As to quaternary structure, homotetramer. Forms heterodimers with either ThiH or ThiS.

It localises to the cytoplasm. It catalyses the reaction [ThiS sulfur-carrier protein]-C-terminal-Gly-aminoethanethioate + 2-iminoacetate + 1-deoxy-D-xylulose 5-phosphate = [ThiS sulfur-carrier protein]-C-terminal Gly-Gly + 2-[(2R,5Z)-2-carboxy-4-methylthiazol-5(2H)-ylidene]ethyl phosphate + 2 H2O + H(+). It functions in the pathway cofactor biosynthesis; thiamine diphosphate biosynthesis. Its function is as follows. Catalyzes the rearrangement of 1-deoxy-D-xylulose 5-phosphate (DXP) to produce the thiazole phosphate moiety of thiamine. Sulfur is provided by the thiocarboxylate moiety of the carrier protein ThiS. In vitro, sulfur can be provided by H(2)S. The chain is Thiazole synthase from Rhizobium meliloti (strain 1021) (Ensifer meliloti).